A 406-amino-acid chain; its full sequence is Probable mannan endo-1,4-beta-mannosidase C (406 aa).

Residues 1-20 (MLINFEKVLSLALLAGSVSG) form the signal peptide. The N-linked (GlcNAc...) asparagine glycan is linked to Asn58. Position 80 (Trp80) interacts with substrate. Residues Asn86 and Asn114 are each glycosylated (N-linked (GlcNAc...) asparagine). Asn201 is a binding site for substrate. Glu202 (proton donor) is an active-site residue. Tyr287 contributes to the substrate binding site. The active-site Nucleophile is the Glu320. Asn338 carries N-linked (GlcNAc...) asparagine glycosylation. Trp362 is a substrate binding site.

It belongs to the glycosyl hydrolase 5 (cellulase A) family.

It is found in the secreted. The catalysed reaction is Random hydrolysis of (1-&gt;4)-beta-D-mannosidic linkages in mannans, galactomannans and glucomannans.. Functionally, endo-1,4-mannanase, a crucial enzyme for depolymerization of seed galactomannans and wood galactoglucomannans. This Aspergillus terreus (strain NIH 2624 / FGSC A1156) protein is Probable mannan endo-1,4-beta-mannosidase C (manC).